The chain runs to 260 residues: Hydroxyethylthiazole kinase (260 aa).

Met-49 contacts substrate. The ATP site is built by Arg-124 and Thr-170. Gly-197 serves as a coordination point for substrate.

The protein belongs to the Thz kinase family. The cofactor is Mg(2+).

The enzyme catalyses 5-(2-hydroxyethyl)-4-methylthiazole + ATP = 4-methyl-5-(2-phosphooxyethyl)-thiazole + ADP + H(+). Its pathway is cofactor biosynthesis; thiamine diphosphate biosynthesis; 4-methyl-5-(2-phosphoethyl)-thiazole from 5-(2-hydroxyethyl)-4-methylthiazole: step 1/1. In terms of biological role, catalyzes the phosphorylation of the hydroxyl group of 4-methyl-5-beta-hydroxyethylthiazole (THZ). The polypeptide is Hydroxyethylthiazole kinase (Yersinia enterocolitica serotype O:8 / biotype 1B (strain NCTC 13174 / 8081)).